A 343-amino-acid polypeptide reads, in one-letter code: N-acetyl-gamma-glutamyl-phosphate reductase (343 aa).

Residue C148 is part of the active site.

The protein belongs to the NAGSA dehydrogenase family. Type 1 subfamily.

Its subcellular location is the cytoplasm. The catalysed reaction is N-acetyl-L-glutamate 5-semialdehyde + phosphate + NADP(+) = N-acetyl-L-glutamyl 5-phosphate + NADPH + H(+). The protein operates within amino-acid biosynthesis; L-arginine biosynthesis; N(2)-acetyl-L-ornithine from L-glutamate: step 3/4. In terms of biological role, catalyzes the NADPH-dependent reduction of N-acetyl-5-glutamyl phosphate to yield N-acetyl-L-glutamate 5-semialdehyde. The sequence is that of N-acetyl-gamma-glutamyl-phosphate reductase from Caldicellulosiruptor bescii (strain ATCC BAA-1888 / DSM 6725 / KCTC 15123 / Z-1320) (Anaerocellum thermophilum).